The sequence spans 202 residues: Probable nicotinate-nucleotide adenylyltransferase (202 aa).

Belongs to the NadD family.

The enzyme catalyses nicotinate beta-D-ribonucleotide + ATP + H(+) = deamido-NAD(+) + diphosphate. The protein operates within cofactor biosynthesis; NAD(+) biosynthesis; deamido-NAD(+) from nicotinate D-ribonucleotide: step 1/1. Catalyzes the reversible adenylation of nicotinate mononucleotide (NaMN) to nicotinic acid adenine dinucleotide (NaAD). This Synechococcus sp. (strain JA-2-3B'a(2-13)) (Cyanobacteria bacterium Yellowstone B-Prime) protein is Probable nicotinate-nucleotide adenylyltransferase.